A 643-amino-acid polypeptide reads, in one-letter code: 1-deoxy-D-xylulose-5-phosphate synthase (643 aa).

Residues H72 and 113–115 contribute to the thiamine diphosphate site; that span reads GHA. Mg(2+) is bound at residue D144. Residues 145–146, N174, Y287, and E370 each bind thiamine diphosphate; that span reads GA. N174 is a binding site for Mg(2+).

The protein belongs to the transketolase family. DXPS subfamily. As to quaternary structure, homodimer. Requires Mg(2+) as cofactor. Thiamine diphosphate is required as a cofactor.

The catalysed reaction is D-glyceraldehyde 3-phosphate + pyruvate + H(+) = 1-deoxy-D-xylulose 5-phosphate + CO2. It participates in metabolic intermediate biosynthesis; 1-deoxy-D-xylulose 5-phosphate biosynthesis; 1-deoxy-D-xylulose 5-phosphate from D-glyceraldehyde 3-phosphate and pyruvate: step 1/1. In terms of biological role, catalyzes the acyloin condensation reaction between C atoms 2 and 3 of pyruvate and glyceraldehyde 3-phosphate to yield 1-deoxy-D-xylulose-5-phosphate (DXP). This is 1-deoxy-D-xylulose-5-phosphate synthase from Prochlorococcus marinus (strain SARG / CCMP1375 / SS120).